Reading from the N-terminus, the 548-residue chain is Probable malate:quinone oxidoreductase (548 aa).

Positions 521 to 548 (DKPQAADSTPKPQLKPQPVQKEVADIAL) are disordered. Residues 530–541 (PKPQLKPQPVQK) are compositionally biased toward low complexity.

This sequence belongs to the MQO family. FAD serves as cofactor.

The catalysed reaction is (S)-malate + a quinone = a quinol + oxaloacetate. The protein operates within carbohydrate metabolism; tricarboxylic acid cycle; oxaloacetate from (S)-malate (quinone route): step 1/1. The protein is Probable malate:quinone oxidoreductase of Escherichia coli O139:H28 (strain E24377A / ETEC).